The primary structure comprises 361 residues: Peptide chain release factor 1 (361 aa).

At Q235 the chain carries N5-methylglutamine.

Belongs to the prokaryotic/mitochondrial release factor family. Post-translationally, methylated by PrmC. Methylation increases the termination efficiency of RF1.

Its subcellular location is the cytoplasm. Functionally, peptide chain release factor 1 directs the termination of translation in response to the peptide chain termination codons UAG and UAA. This chain is Peptide chain release factor 1, found in Xanthomonas oryzae pv. oryzae (strain MAFF 311018).